Consider the following 428-residue polypeptide: Dihydroorotase (428 aa).

Histidine 59 and histidine 61 together coordinate Zn(2+). Substrate is bound by residues 61-63 (HLR) and asparagine 93. Residues aspartate 151, histidine 178, and histidine 231 each coordinate Zn(2+). Asparagine 277 lines the substrate pocket. Aspartate 304 is a Zn(2+) binding site. Aspartate 304 is a catalytic residue. Residues histidine 308 and 322–323 (FG) each bind substrate.

This sequence belongs to the metallo-dependent hydrolases superfamily. DHOase family. Class I DHOase subfamily. It depends on Zn(2+) as a cofactor.

It carries out the reaction (S)-dihydroorotate + H2O = N-carbamoyl-L-aspartate + H(+). It participates in pyrimidine metabolism; UMP biosynthesis via de novo pathway; (S)-dihydroorotate from bicarbonate: step 3/3. Its function is as follows. Catalyzes the reversible cyclization of carbamoyl aspartate to dihydroorotate. This is Dihydroorotase from Bacillus cereus (strain G9842).